Consider the following 498-residue polypeptide: ATP synthase subunit beta, chloroplastic (498 aa).

172–179 lines the ATP pocket; sequence GGAGVGKT.

This sequence belongs to the ATPase alpha/beta chains family. F-type ATPases have 2 components, CF(1) - the catalytic core - and CF(0) - the membrane proton channel. CF(1) has five subunits: alpha(3), beta(3), gamma(1), delta(1), epsilon(1). CF(0) has four main subunits: a(1), b(1), b'(1) and c(9-12).

The protein resides in the plastid. It is found in the chloroplast thylakoid membrane. It carries out the reaction ATP + H2O + 4 H(+)(in) = ADP + phosphate + 5 H(+)(out). Produces ATP from ADP in the presence of a proton gradient across the membrane. The catalytic sites are hosted primarily by the beta subunits. This is ATP synthase subunit beta, chloroplastic from Lactuca sativa (Garden lettuce).